We begin with the raw amino-acid sequence, 549 residues long: Ceramide kinase 1 (549 aa).

Positions 162–316 (NRPKNIIIFI…VDVCTVHQHQ (155 aa)) constitute a DAGKc domain. Residues 172 to 174 (NPF) and 205 to 209 (TERAN) contribute to the ATP site. 233–236 (GGDG) is a binding site for substrate. Residue aspartate 235 is the Proton donor/acceptor of the active site. ATP-binding positions include glutamate 240, 277-279 (GSA), arginine 342, arginine 348, and 500-502 (DGE).

The catalysed reaction is an N-acylsphing-4-enine + ATP = an N-acylsphing-4-enine 1-phosphate + ADP + H(+). It catalyses the reaction an N-acyl-15-methylhexadecasphing-4-enine + ATP = an N-acyl-15-methylhexadecasphing-4-enine-1-phosphate + ADP + H(+). It functions in the pathway lipid metabolism; sphingolipid metabolism. Catalyzes the phosphorylation of ceramide to form ceramide 1-phosphate. C.elegans contain specific sphingoid bases, which are unique or different in structure compared to the sphingoid bases found in other animals. Two examples of these distinctive compounds are: 15-methylhexadecasphinganine and 15-methylhexadecasphing-4-enine. The chain is Ceramide kinase 1 from Caenorhabditis elegans.